The sequence spans 485 residues: ATP-dependent rRNA helicase RRP3 (485 aa).

Over residues 1–10 (MPVLKKRKLA) the composition is skewed to basic residues. The interval 1–55 (MPVLKKRKLAHTAQPDPIVSDLESSSSEASQQSHDEQLTAANEQDDESPQVQREE) is disordered. Over residues 20–32 (SDLESSSSEASQQ) the composition is skewed to low complexity. A Q motif motif is present at residues 59–87 (KSFKDLGIIDSLCEACEALGYKSPTPIQA). In terms of domain architecture, Helicase ATP-binding spans 90–261 (IPLALQGRDL…RASLSNPLRV (172 aa)). Residue 103–110 (AETGSGKT) coordinates ATP. Residues 209-212 (DEAD) carry the DEAD box motif. The Helicase C-terminal domain maps to 285 to 433 (YKDIYLVYLL…EYKVEKEEVM (149 aa)). Residues 449 to 458 (EMKDLHEKRG) are compositionally biased toward basic and acidic residues. Positions 449–485 (EMKDLHEKRGSRGATLKGRRPAKGAKRGRDEMDREEG) are disordered. Basic residues predominate over residues 465-474 (KGRRPAKGAK). Positions 475–485 (RGRDEMDREEG) are enriched in basic and acidic residues.

Belongs to the DEAD box helicase family. DDX47/RRP3 subfamily. As to quaternary structure, interacts with the SSU processome.

The protein resides in the nucleus. It catalyses the reaction ATP + H2O = ADP + phosphate + H(+). In terms of biological role, ATP-dependent rRNA helicase required for pre-ribosomal RNA processing. Involved in the maturation of the 35S-pre-rRNA and to its cleavage to mature 18S rRNA. The chain is ATP-dependent rRNA helicase RRP3 from Ajellomyces capsulatus (strain NAm1 / WU24) (Darling's disease fungus).